The primary structure comprises 2346 residues: Acetyl-CoA carboxylase 1 (2346 aa).

M1 carries the post-translational modification N-acetylmethionine. 8 positions are modified to phosphoserine: S5, S23, S25, S29, S34, S48, S50, and S53. Position 58 is a phosphothreonine (T58). S78 carries the post-translational modification Phosphoserine. A Phosphoserine; by AMPK modification is found at S80. One can recognise a Biotin carboxylation domain in the interval 117 to 618 (VIEKVLIANN…DTGWLDRLIA (502 aa)). The ATP-grasp domain maps to 275–466 (SKRILNVPQE…LPAAQLQIAM (192 aa)). 315–320 (GGGGKG) is an ATP binding site. 3 residues coordinate Mg(2+): E424, E437, and N439. 3 residues coordinate Mn(2+): E424, E437, and N439. The active site involves R441. T610 carries the post-translational modification Phosphothreonine. Residues 745 to 819 (FEKENDPSVL…DPGCVIAKMQ (75 aa)) enclose the Biotinyl-binding domain. Position 786 is an N6-biotinyllysine (K786). Phosphoserine occurs at positions 835, 1201, 1216, and 1218. Residue T1227 is modified to Phosphothreonine. Phosphoserine occurs at positions 1259, 1263, and 1273. K1334 carries the N6-acetyllysine modification. A CoA carboxyltransferase N-terminal domain is found at 1576-1914 (PYVTKDLLQS…SVYSSVPLLN (339 aa)). The segment at 1576–2234 (PYVTKDLLQS…EDLVKKKIHN (659 aa)) is carboxyltransferase. R1823, K2127, and R2129 together coordinate CoA. Residues 1918–2234 (PIDRVIEFVP…EDLVKKKIHN (317 aa)) enclose the CoA carboxyltransferase C-terminal domain. T2153 carries the phosphothreonine modification.

As to quaternary structure, monomer, homodimer, and homotetramer. Can form filamentous polymers. Interacts in its inactive phosphorylated form with the BRCT domains of BRCA1 which prevents ACACA dephosphorylation and inhibits lipid synthesis. Interacts with MID1IP1; interaction with MID1IP1 promotes oligomerization and increases its activity. Mg(2+) is required as a cofactor. Requires Mn(2+) as cofactor. It depends on biotin as a cofactor. Post-translationally, phosphorylation on Ser-1263 is required for interaction with BRCA1. In terms of processing, phosphorylation at Ser-80 by AMPK inactivates enzyme activity. The biotin cofactor is covalently attached to the central biotinyl-binding domain and is required for the catalytic activity. As to expression, expressed at high levels in mammary gland.

The protein resides in the cytoplasm. It is found in the cytosol. The catalysed reaction is hydrogencarbonate + acetyl-CoA + ATP = malonyl-CoA + ADP + phosphate + H(+). It participates in lipid metabolism; malonyl-CoA biosynthesis; malonyl-CoA from acetyl-CoA: step 1/1. Inhibited by phosphorylation. Citrate promotes oligomerization of the protein into filaments that correspond to the most active form of the carboxylase. Functionally, cytosolic enzyme that catalyzes the carboxylation of acetyl-CoA to malonyl-CoA, the first and rate-limiting step of de novo fatty acid biosynthesis. This is a 2 steps reaction starting with the ATP-dependent carboxylation of the biotin carried by the biotin carboxyl carrier (BCC) domain followed by the transfer of the carboxyl group from carboxylated biotin to acetyl-CoA. This Ovis aries (Sheep) protein is Acetyl-CoA carboxylase 1.